The sequence spans 330 residues: DNA-directed RNA polymerase subunit alpha (330 aa).

The interval 1–232 (MAILAFQKPD…YHFMLFSDEK (232 aa)) is alpha N-terminal domain (alpha-NTD). The alpha C-terminal domain (alpha-CTD) stretch occupies residues 248–330 (EEVLHMRQLL…DISKYKLDKE (83 aa)).

The protein belongs to the RNA polymerase alpha chain family. Homodimer. The RNAP catalytic core consists of 2 alpha, 1 beta, 1 beta' and 1 omega subunit. When a sigma factor is associated with the core the holoenzyme is formed, which can initiate transcription.

It catalyses the reaction RNA(n) + a ribonucleoside 5'-triphosphate = RNA(n+1) + diphosphate. In terms of biological role, DNA-dependent RNA polymerase catalyzes the transcription of DNA into RNA using the four ribonucleoside triphosphates as substrates. The polypeptide is DNA-directed RNA polymerase subunit alpha (Bacteroides thetaiotaomicron (strain ATCC 29148 / DSM 2079 / JCM 5827 / CCUG 10774 / NCTC 10582 / VPI-5482 / E50)).